Here is a 95-residue protein sequence, read N- to C-terminus: UPF0213 protein PEPE_0875 (95 aa).

Residues 7–82 (NGFYFYVLRC…KQRTRSSKIK (76 aa)) enclose the GIY-YIG domain.

The protein belongs to the UPF0213 family.

The chain is UPF0213 protein PEPE_0875 from Pediococcus pentosaceus (strain ATCC 25745 / CCUG 21536 / LMG 10740 / 183-1w).